The following is a 3108-amino-acid chain: MTENIDKNDDDVAVIGIGLRFPSGNLKESISKPNQLFNELLNGLDGIVTTSERWSDNYYLNGEVVSKFAGLLPLDEWKQFDPIFFAINPSYDNVSSIDPQQRLLLKCVWEALEDSGIDPISLRGTNTSTFIGSSTIDYNDLQKSPFETQNNIFGSTTHSIANRIGFSFDFRGENLTIDTACSSSSNAINCGYNSIKSNKSNVSIVGGVNFILNPYISKSFTQLDMLSPTGKCHTFSSDADGFVRSEGVGIVVLKKLKDAIKDSNNIYCVIKGSSSNIDGNFDKLNFYSPSKLSQCENIKLAIKSTNGQINESDIDYCETHGTGTPTGDPIELEGISRAFNNKASTTNNNKQVLVGSFKSNIGHTEACSGVASLIKCCLMFKNKLFLQNINFKEPNPLINFKEWGLKVVTEPIKFNENKPTVMLINNFGITGSNVCLILSEFSGNSKSNDYQKMEIDNKFNEKKKYLIPLSSNSSTSLNNYKLSIIKHLNSRSSSSSTTTSFEEFVYNQIKFKSTSLIQKSVIIASDWNEFQDENNQIKLENSDNLISNITVEKKKSPIIVMVLCGQGSQYNKMALSLYDNEPIFREYVNRFDKELFKYYGYSVLDKLRSIEDKDLISIHQPILAQPATVIIQVSLYELYKHWGVSADIIIGHSLGEISSAYCSGMIDFQTLCYLTYHRSVAQNRTTGTGKMLSVNISSDEFINSYQSTTKYESLEIACYNSPTSIVIAGKEDLLNEIIKDFKSNDIFCAMLGSLSSFHTSSQQMIKDEVCSLNISSKQPSIAIFSTVTTNLFNHQSSPFDADYVFDNIRQPVRFTQTITNLYKYAESNDMGNEITFIEVSPHPTLQFYLNQMNSTQSSYFNSGKNITIYSPLNKKKNDYNEFLKTISLLYVNNNLNINFKSQLINNNNNNNNNNYTNLFNNLPLYQWDDKEYFKITSFHEKIKSEGPSIHSLGNNTDSPYPSYQTFIDIKKSPFQWLKGHQVSDKFYYPGMGHVHNLLSIYPNQDITISSLEFKSPLVLAEGNRQCLQTSVTPLSKNEFNIKSHYKDQKTNQWILTSLGNFSLFKHNIIENNQPINIQTLKDKCNFTSISKQDLYETIRIKTNLTYKGLFQGVKQCHIGNNCSLAIVSLNEIYIQKEYNHLINNSNMNTLFNTAILDTCLHGVLCAVTQPVVLDRIEGFNFYSSNIPSSLNYRNNNNNNNNINNNNNNNNNSNNTINEFYVYSEIRARTNFQTYSGSIKIILPNGTLLVDIGNVVCTIAASNPDSSLICKPNYIYTPHLQSKDSIINKPEQFKHLHRVNEFSFKNEENLFISNRLLLSLFYKHINNRCPSINLESLETLEYDQFKQLYYNSLVNENLFKFIFEILKKYQNIPNINNNNNNNNNNNNNNNNNNNNNNNNNNNNNNNNNNNNNNNNNNNNNNNNNNNNNNNNNNNNNEKLYIKTTKIMAKQLFPLKDDDSITDTPQSLFESGYLDVFYKNSIVVQPLNSLLSEIIVETLKPILNEPIVFRILEAGGGTGSLSLLILEKICKLLNENNSTTSIIDIEFTWSDISASFFAEIKEKFSSFTNHNSLNIIYRVLDLDKPLLDQDLKASYYDFVVMSNVMHVVKKLKPTLNEIHNILAPNGQLLFVEPPYKSFFIDSIFGCFSQWWPSSDSDIELRPDRCCMKQEKWINLLNQCNYRDTIMSGNDNLLFLVQTRKPTINEIISEQSISLDQLKSFNNIILFSSNNKNNKNDSFSIIQNLITLNQELKHKIININNYNEFQSWITNNQNIDNKTLIIFLKSIDSTVNTSNFKETTFEYIQINQLILKLELSNNFKHLLLSLNSTTDNYLTSSIVGAARYFIEFPQLDLLTLNYDNVSIENNQQLLSLINYLINSNNNIQKEFTINNNIVYYERFCKRLNNIKSKFQSKSFETNKDNLYIQLNSNLEYQLYSKKDELNSNEVEIEIKATGINYKDYLLHIGMIGTNLEIKYGKEIENGIGFDNPKIGNDFSGIITRLGCNVKEFKVGDQVCGFGSKTNSSHIIVDSDSIYYKPLYYSHSVSASIPSIYITSLHSIYGIGNLKSNESILIHSAAGGVGLSSLDLLKSKQHQGYIFLTVGSKDKEEYLINKYGSLITAIYSSRNKNYVYEIKNKLIELGEVEQHQQGVDLILNTLSSEFMSPNFQCLNLSGRIVDLSITHLTPNDYMTNSHYKFNMGYNNVNVEDFPGKLIKSYLKKIIEMINSNELELSVPIIEYSNNQFKDAIEYINQRKHIGKIIVNHSQDEFNRVYNNYQNNNNQIIMKHSYDISKLNIGKNIILTGQTGIVLEILKYLVKYSNHSIENIIILSKSKLKWELELLINQTKFKKDNIIKFHFNQIDIEDSNKVNQALNQLELNENITNIDSIIHFAFMNDIGDVQQVDMNRLNNAHGAKTIGAINLHNQSINRSWNIKQFIMASSVASIVGSEQQCCYVSACNVIDSLSKYRHSIGLPSLAINLGTISSTGFITRNNTIETMLKSSILNFLSPQLVISSLDLFIQNQHQYPNYCMSDFKFKIIPSTNQYFSKFDFEINIVKKSNQIKSFFGGDGNNEIIHSTILNKISELLSIDKSKINEDLQLTQYGTDSLVIVQLKNFIDNQLGHNIITIQQLQNNKINQSIEIIKSALNKNNNIYNNKKNNNNNLVKKEQQSLDEFIKNETKLNESIISRPYSIKKILNNNNNSKSIFLTGSTGFLGAYLLMELIKMNNISKIYCLIRNNSKLTNPIDVIINNLKKHQLIDMNKESPKRKTKIINHTGNISNDKLNSSDNSNNNNNQINEDQLIKIIPMIGDISKDKFGLTEQDYLKLSNECDIIINSAADLNLKSNYEESKTINVNNVNQVIKLSVSNNSSQKLIVHFSSLAVFINHPFKDEEDFEETNIVPNFNSTPIGYIQSKVISEKLLTNAAESRGIPSIIIRPPDIFSNPITGIGHSNDFLSLLIKASKDIGYYPNIHKSIFSTPVTTIAKTTIDLIFNENSWNQNKSKPISIYNFNGNSMEFKSFYRVLENNFKCKEIDFDEWIELVSKSNGKSSKRYSTFHIHKNQNLLLTTFTINSLFKMSNSTKELLISIGSYNHQDWEINESMILNDIINNH.

The region spanning 9–440 is the Ketosynthase family 3 (KS3) domain; it reads DDDVAVIGIG…GSNVCLILSE (432 aa). Catalysis depends on for beta-ketoacyl synthase activity residues C181, H320, and H363. An acyl/malonyl transferase region spans residues 643–676; the sequence is GVSADIIIGHSLGEISSAYCSGMIDFQTLCYLTY. S653 (for acyl/malonyl transferase activity) is an active-site residue. The segment at 939–1068 is N-terminal hotdog fold; it reads HEKIKSEGPS…GNFSLFKHNI (130 aa). A PKS/mFAS DH domain is found at 939 to 1265; sequence HEKIKSEGPS…CTIAASNPDS (327 aa). The active-site Proton acceptor; for dehydratase activity is the H980. The tract at residues 1085 to 1265 is C-terminal hotdog fold; the sequence is NFTSISKQDL…CTIAASNPDS (181 aa). D1157 (proton donor; for dehydratase activity) is an active-site residue. A disordered region spans residues 1375–1435; sequence NNNNNNNNNN…NNNNNNNNNN (61 aa). The region spanning 2566-2643 is the Carrier domain; the sequence is GNNEIIHSTI…QSIEIIKSAL (78 aa). S2603 bears the O-(pantetheine 4'-phosphoryl)serine mark. Residues 2702-2722 traverse the membrane as a helical segment; the sequence is IFLTGSTGFLGAYLLMELIKM.

Requires pantetheine 4'-phosphate as cofactor.

It is found in the membrane. Probable polyketide synthase. The protein is Probable polyketide synthase 39 (pks39) of Dictyostelium discoideum (Social amoeba).